The following is a 281-amino-acid chain: Protein synthesis inhibitor I (281 aa).

N-acetylalanine is present on alanine 2. Glutamate 175 is a catalytic residue.

It belongs to the ribosome-inactivating protein family. Type 1 RIP subfamily.

It localises to the cytoplasm. It carries out the reaction Endohydrolysis of the N-glycosidic bond at one specific adenosine on the 28S rRNA.. In terms of biological role, inhibits the elongation phase of protein synthesis. It inactivates fungal ribosomes even more effectively than mammalian ribosomes and is thought to function as a constitutive antifungal agent in plants. This chain is Protein synthesis inhibitor I (RIP30), found in Hordeum vulgare (Barley).